The primary structure comprises 218 residues: Phosphoribosylformylglycinamidine synthase subunit PurQ (218 aa).

A Glutamine amidotransferase type-1 domain is found at 2–218 (TIGIVVFPGS…IKILQALLSN (217 aa)). The active-site Nucleophile is the C86. Catalysis depends on residues H194 and E196.

Part of the FGAM synthase complex composed of 1 PurL, 1 PurQ and 2 PurS subunits.

It localises to the cytoplasm. It carries out the reaction N(2)-formyl-N(1)-(5-phospho-beta-D-ribosyl)glycinamide + L-glutamine + ATP + H2O = 2-formamido-N(1)-(5-O-phospho-beta-D-ribosyl)acetamidine + L-glutamate + ADP + phosphate + H(+). The catalysed reaction is L-glutamine + H2O = L-glutamate + NH4(+). It participates in purine metabolism; IMP biosynthesis via de novo pathway; 5-amino-1-(5-phospho-D-ribosyl)imidazole from N(2)-formyl-N(1)-(5-phospho-D-ribosyl)glycinamide: step 1/2. Functionally, part of the phosphoribosylformylglycinamidine synthase complex involved in the purines biosynthetic pathway. Catalyzes the ATP-dependent conversion of formylglycinamide ribonucleotide (FGAR) and glutamine to yield formylglycinamidine ribonucleotide (FGAM) and glutamate. The FGAM synthase complex is composed of three subunits. PurQ produces an ammonia molecule by converting glutamine to glutamate. PurL transfers the ammonia molecule to FGAR to form FGAM in an ATP-dependent manner. PurS interacts with PurQ and PurL and is thought to assist in the transfer of the ammonia molecule from PurQ to PurL. The polypeptide is Phosphoribosylformylglycinamidine synthase subunit PurQ (Prochlorococcus marinus (strain SARG / CCMP1375 / SS120)).